The primary structure comprises 231 residues: Transmembrane protein 225 (231 aa).

At 1–13 the chain is on the cytoplasmic side; it reads MMRIPNRSIQAAN. The helical transmembrane segment at 14-34 threads the bilayer; that stretch reads IFFSSGAILLLIAGLIMENWV. The Extracellular segment spans residues 35–71; sequence ELIPKVRKDKVTHSPWLGCCPPFWPEESLEAIRRMMM. Residues 72–92 form a helical membrane-spanning segment; that stretch reads MSLNISIYLNLIIGLQFTYMI. The Cytoplasmic segment spans residues 93 to 99; that stretch reads SQNKCVH. Residues 100–120 form a helical membrane-spanning segment; sequence LLIGFLSFFTGCLLFYAIIVY. Residues 121 to 139 lie on the Extracellular side of the membrane; that stretch reads HHKLNKGQYVYFVNYKTKW. A helical membrane pass occupies residues 140-160; sequence IVFTIYLTIALFLTCGIFSFI. At 161–231 the chain is on the cytoplasmic side; it reads QCTNRCACMK…LQSRRVTWAL (71 aa). Positions 225–229 match the RVxF motif; it reads RRVTW.

As to quaternary structure, interacts (via RVxF motif) with PPP1CC. In terms of tissue distribution, expressed in testis, specifically in spermatocytes and round spermatids.

The protein resides in the cytoplasmic vesicle. The protein localises to the secretory vesicle. It localises to the acrosome membrane. Functionally, probably inhibits protein phosphatase 1 (PP1) in sperm via binding to catalytic subunit PPP1CC. The polypeptide is Transmembrane protein 225 (Tmem225) (Rattus norvegicus (Rat)).